A 65-amino-acid polypeptide reads, in one-letter code: Light-harvesting protein B800/830/1020 alpha-2 chain (65 aa).

The Cytoplasmic segment spans residues 1–13; that stretch reads MWKLWKFVDFRMT. A helical transmembrane segment spans residues 14-34; it reads AVGFHIFFALIAFAVHFACIS. Residue His29 coordinates a bacteriochlorophyll. Residues 35-65 are Periplasmic-facing; sequence SERFNWLEGAPAAEYYMDENPGIWKRTSYDG.

It belongs to the antenna complex alpha subunit family. As to quaternary structure, the core complex is formed by different alpha and beta chains, binding bacteriochlorophyll molecules, and arranged most probably in tetrameric structures disposed around the reaction center. The non-pigmented gamma chains may constitute additional components.

The protein resides in the cell inner membrane. In terms of biological role, antenna complexes are light-harvesting systems, which transfer the excitation energy to the reaction centers. The polypeptide is Light-harvesting protein B800/830/1020 alpha-2 chain (Halorhodospira halochloris (Ectothiorhodospira halochloris)).